The sequence spans 85 residues: Small ribosomal subunit protein uS17 (85 aa).

Belongs to the universal ribosomal protein uS17 family. Part of the 30S ribosomal subunit.

Its function is as follows. One of the primary rRNA binding proteins, it binds specifically to the 5'-end of 16S ribosomal RNA. The sequence is that of Small ribosomal subunit protein uS17 from Syntrophus aciditrophicus (strain SB).